The sequence spans 387 residues: Cobalt-precorrin-5B C(1)-methyltransferase (387 aa).

It belongs to the CbiD family.

It catalyses the reaction Co-precorrin-5B + S-adenosyl-L-methionine = Co-precorrin-6A + S-adenosyl-L-homocysteine. Its pathway is cofactor biosynthesis; adenosylcobalamin biosynthesis; cob(II)yrinate a,c-diamide from sirohydrochlorin (anaerobic route): step 6/10. In terms of biological role, catalyzes the methylation of C-1 in cobalt-precorrin-5B to form cobalt-precorrin-6A. The sequence is that of Cobalt-precorrin-5B C(1)-methyltransferase from Desulfitobacterium hafniense (strain Y51).